The chain runs to 748 residues: Signal transducer and activator of transcription 4 (748 aa).

In terms of domain architecture, SH2 spans 569 to 664 (WIDGYVMGFV…ENPLKYLYPD (96 aa)). Lysine 667 bears the N6-acetyllysine mark. Phosphotyrosine; by JAK is present on tyrosine 693. Serine 721 bears the Phosphoserine; by MAP2K6 mark.

Belongs to the transcription factor STAT family. In terms of assembly, forms a homodimer or a heterodimer with a related family member. Interacts with ARL2BP. The SH2 domain interacts, in vitro, with IL12RB2 via a short cytoplasmic domain. Interacts with STAT1. Interacts with JUN; this complex efficiently interacts with the AP-1-related sequence of the IFN-gamma. Post-translationally, acetylation at Lys-667 is required for JAK2-mediated phosphorylation and activation of STAT4. In terms of processing, tyrosine phosphorylated upon IL12 and IFN-alpha activation, but not by IFN-gamma in T-lymphocytes and NK cells. Serine phosphorylation is required for maximal transcriptional activity but not for DNA binding. Phosphorylation by MAP2K6 at Ser-721 is required for full transcriptional activity induced by IL12. However this serine phosphorylation is not required for cell proliferation although critical for IFN-gamma production.

The protein localises to the cytoplasm. It localises to the nucleus. Transcriptional regulator mainly expressed in hematopoietic cells that plays a critical role in cellular growth, differentiation and immune response. Plays a key role in the differentiation of T-helper 1 cells and the production of interferon-gamma. Also participates in multiple neutrophil functions including chemotaxis and production of the neutrophil extracellular traps. After IL12 binding to its receptor IL12RB2, STAT4 interacts with the intracellular domain of IL12RB2 and becomes tyrosine phosphorylated. Phosphorylated STAT4 then homodimerizes and migrates to the nucleus where it can recognize STAT target sequences present in IL12 responsive genes. Although IL12 appears to be the predominant activating signal, STAT4 can also be phosphorylated and activated in response to IFN-gamma stimulation via JAK1 and TYK2 and in response to different interleukins including IL23, IL2 and IL35. Transcription activation of IFN-gamma gene is mediated by interaction with JUN that forms a complex that efficiently interacts with the AP-1-related sequence of the IFN-gamma promoter. In response to IFN-alpha/beta signaling, acts as a transcriptional repressor and suppresses IL5 and IL13 mRNA expression during response to T-cell receptor (TCR) activation. This Homo sapiens (Human) protein is Signal transducer and activator of transcription 4 (STAT4).